Consider the following 51-residue polypeptide: Large ribosomal subunit protein eL39 (51 aa).

Residues 1–22 (MPSQKSFRTKQKLAKAQKQNRP) form a disordered region.

The protein belongs to the eukaryotic ribosomal protein eL39 family. As to quaternary structure, interacts with YIH1.

The sequence is that of Large ribosomal subunit protein eL39 (RPL39) from Debaryomyces hansenii (strain ATCC 36239 / CBS 767 / BCRC 21394 / JCM 1990 / NBRC 0083 / IGC 2968) (Yeast).